The sequence spans 1420 residues: Putative mediator of RNA polymerase II transcription subunit 14 (1420 aa).

The stretch at 1–43 (MDQNQQQQQQQQQQQQQQQQQQQQQQQQQQQQQQQQQQQQQQQ) forms a coiled coil. 2 stretches are compositionally biased toward low complexity: residues 1-43 (MDQN…QQQQ) and 449-474 (TTSSSSSSSSNNNNTASPIINRNNNN). Disordered regions lie at residues 1-59 (MDQN…TTPI), 449-490 (TTSS…NPLS), 750-799 (QQDI…GYKN), and 1389-1420 (QQQQQQQQQQQQQQQQQQIENNNFASASSSIR). The segment covering 475–490 (GKPNLLSTKQSNNPLS) has biased composition (polar residues). Composition is skewed to low complexity over residues 755–795 (NNNN…NGNN) and 1389–1406 (QQQQQQQQQQQQQQQQQQ). Residues 1382–1412 (LLIQQQQQQQQQQQQQQQQQQQQQQIENNNF) are a coiled coil. Over residues 1407-1420 (IENNNFASASSSIR) the composition is skewed to polar residues.

The protein belongs to the Mediator complex subunit 14 family. As to quaternary structure, component of the Mediator complex.

It localises to the nucleus. Its function is as follows. Component of the Mediator complex, a coactivator involved in the regulated transcription of nearly all RNA polymerase II-dependent genes. Mediator functions as a bridge to convey information from gene-specific regulatory proteins to the basal RNA polymerase II transcription machinery. Mediator is recruited to promoters by direct interactions with regulatory proteins and serves as a scaffold for the assembly of a functional preinitiation complex with RNA polymerase II and the general transcription factors. In Dictyostelium discoideum (Social amoeba), this protein is Putative mediator of RNA polymerase II transcription subunit 14 (med14).